Reading from the N-terminus, the 255-residue chain is Imidazole glycerol phosphate synthase subunit HisF (255 aa).

Catalysis depends on residues Asp-11 and Asp-130.

This sequence belongs to the HisA/HisF family. Heterodimer of HisH and HisF.

It is found in the cytoplasm. The enzyme catalyses 5-[(5-phospho-1-deoxy-D-ribulos-1-ylimino)methylamino]-1-(5-phospho-beta-D-ribosyl)imidazole-4-carboxamide + L-glutamine = D-erythro-1-(imidazol-4-yl)glycerol 3-phosphate + 5-amino-1-(5-phospho-beta-D-ribosyl)imidazole-4-carboxamide + L-glutamate + H(+). The protein operates within amino-acid biosynthesis; L-histidine biosynthesis; L-histidine from 5-phospho-alpha-D-ribose 1-diphosphate: step 5/9. Functionally, IGPS catalyzes the conversion of PRFAR and glutamine to IGP, AICAR and glutamate. The HisF subunit catalyzes the cyclization activity that produces IGP and AICAR from PRFAR using the ammonia provided by the HisH subunit. This is Imidazole glycerol phosphate synthase subunit HisF from Rhodopseudomonas palustris (strain HaA2).